A 905-amino-acid chain; its full sequence is Sun domain-containing protein 1 (905 aa).

3 disordered regions span residues 1-21 (MSGD…LPLQ), 41-166 (NNTV…ILKQ), and 207-242 (QQQQ…IDNN). Residues 1-290 (MSGDYKPNYQ…NNNNKVNFKQ (290 aa)) are Nuclear-facing. Low complexity-rich tracts occupy residues 41–67 (NNTV…SSYL) and 75–101 (SNQI…ASSS). A compositionally biased stretch (basic and acidic residues) spans 107–116 (KVDHNSHNNN). Residues 117–126 (DDDDIEDDVD) are compositionally biased toward acidic residues. Polar residues predominate over residues 129–146 (YSTNNASSNILHNRFSNS). Residues 170 to 221 (LYNHLNNQIQQQQQQQQQQQQQQQQQQQQQQQQQQQQQQQQQQQRNNNNNSN) are a coiled coil. The span at 207–227 (QQQQQQQRNNNNNSNSSNNNN) shows a compositional bias: low complexity. Residues 291–311 (AIWIFIFSVLFIGCLLGLFST) form a helical membrane-spanning segment. Over 312–905 (NFYGIHIYFP…IEKQQQSDEL (594 aa)) the chain is Perinuclear space. Coiled-coil stretches lie at residues 359–456 (KKNE…QLIQ) and 504–609 (REFN…TQQF). The SUN domain occupies 662–860 (GASIEYNALH…YRFRVHGYQI (199 aa)). A coiled-coil region spans residues 864-901 (EQEQIQIIQEEQSFKQEEINQQQIEQIEQIEQIEKQQQ).

Homodimer and homooligomer.

It localises to the nucleus membrane. May have an important role in defining the spacing of the nuclear envelope lumen. Essential for centrosome attachment to the nucleus, maintenance of correct ploidy, proper mitosis, association of the centromere cluster with the centrosome and the maintenance of genome stability. Requires direct chromatin binding for inner nuclear membrane targeting. The chain is Sun domain-containing protein 1 (sun1) from Dictyostelium discoideum (Social amoeba).